The following is a 218-amino-acid chain: GTP cyclohydrolase 1 (218 aa).

Zn(2+) contacts are provided by Cys-109, His-112, and Cys-180.

This sequence belongs to the GTP cyclohydrolase I family. As to quaternary structure, toroid-shaped homodecamer, composed of two pentamers of five dimers.

The enzyme catalyses GTP + H2O = 7,8-dihydroneopterin 3'-triphosphate + formate + H(+). The protein operates within cofactor biosynthesis; 7,8-dihydroneopterin triphosphate biosynthesis; 7,8-dihydroneopterin triphosphate from GTP: step 1/1. The protein is GTP cyclohydrolase 1 of Actinobacillus pleuropneumoniae serotype 5b (strain L20).